We begin with the raw amino-acid sequence, 307 residues long: Protein Y (307 aa).

This sequence belongs to the ATP-dependent AMP-binding enzyme family.

The protein operates within antibiotic biosynthesis; candicidin biosynthesis. In terms of biological role, may be a p-aminobenzoic acid-CoA ligase that activates PabA to start the biosynthesis of candicidin. The protein is Protein Y of Streptomyces griseus.